The following is a 153-amino-acid chain: MSQEIRAIVRIGDTDLDGNKQVAYSLTKIRGIGIATAYAICRKLGIDPHAILGALSEEQINKLDWAVRNLHELAPAWFLNRRKDPETGKDLHLIGAELVLAAKRDVDLMKKLKSWKGVRHSLGLKVRGQRTVTTGRLGPVAGVTKKKAAAGGK.

The protein belongs to the universal ribosomal protein uS13 family. In terms of assembly, part of the 30S ribosomal subunit. Forms a loose heterodimer with protein S19. Forms two bridges to the 50S subunit in the 70S ribosome.

Located at the top of the head of the 30S subunit, it contacts several helices of the 16S rRNA. In the 70S ribosome it contacts the 23S rRNA (bridge B1a) and protein L5 of the 50S subunit (bridge B1b), connecting the 2 subunits; these bridges are implicated in subunit movement. This chain is Small ribosomal subunit protein uS13, found in Pyrobaculum islandicum (strain DSM 4184 / JCM 9189 / GEO3).